The chain runs to 547 residues: Glucose-6-phosphate isomerase (547 aa).

Glu350 serves as the catalytic Proton donor. Active-site residues include His381 and Lys510.

It belongs to the GPI family.

It localises to the cytoplasm. The catalysed reaction is alpha-D-glucose 6-phosphate = beta-D-fructose 6-phosphate. The protein operates within carbohydrate biosynthesis; gluconeogenesis. It functions in the pathway carbohydrate degradation; glycolysis; D-glyceraldehyde 3-phosphate and glycerone phosphate from D-glucose: step 2/4. Functionally, catalyzes the reversible isomerization of glucose-6-phosphate to fructose-6-phosphate. In Mesorhizobium japonicum (strain LMG 29417 / CECT 9101 / MAFF 303099) (Mesorhizobium loti (strain MAFF 303099)), this protein is Glucose-6-phosphate isomerase.